The sequence spans 373 residues: Glutamate 5-kinase (373 aa).

Residue lysine 15 coordinates ATP. Substrate-binding residues include serine 55, aspartate 142, and asparagine 154. Residues 174–175 and 216–222 each bind ATP; these read TD and TGGMVTK. Residues 281–359 form the PUA domain; the sequence is SGRVIVDDGA…GEIEAILGYK (79 aa).

It belongs to the glutamate 5-kinase family.

The protein resides in the cytoplasm. It catalyses the reaction L-glutamate + ATP = L-glutamyl 5-phosphate + ADP. The protein operates within amino-acid biosynthesis; L-proline biosynthesis; L-glutamate 5-semialdehyde from L-glutamate: step 1/2. Functionally, catalyzes the transfer of a phosphate group to glutamate to form L-glutamate 5-phosphate. This is Glutamate 5-kinase from Geobacter metallireducens (strain ATCC 53774 / DSM 7210 / GS-15).